The chain runs to 206 residues: 2,3-bisphosphoglycerate-dependent phosphoglycerate mutase (206 aa).

Substrate-binding positions include 9–16, 22–23, Arg61, 88–91, Lys99, 115–116, and 159–160; these read RHGQSEWN, TG, ERDY, RR, and GN. His10 serves as the catalytic Tele-phosphohistidine intermediate. Residue Glu88 is the Proton donor/acceptor of the active site.

It belongs to the phosphoglycerate mutase family. BPG-dependent PGAM subfamily. In terms of assembly, homodimer.

The catalysed reaction is (2R)-2-phosphoglycerate = (2R)-3-phosphoglycerate. It participates in carbohydrate degradation; glycolysis; pyruvate from D-glyceraldehyde 3-phosphate: step 3/5. In terms of biological role, catalyzes the interconversion of 2-phosphoglycerate and 3-phosphoglycerate. In Brucella melitensis biotype 2 (strain ATCC 23457), this protein is 2,3-bisphosphoglycerate-dependent phosphoglycerate mutase.